The chain runs to 473 residues: Phosphatidylserine synthase 1 (473 aa).

Ala2 is subject to N-acetylalanine. The Cytoplasmic segment spans residues 2–35; sequence ASCVGSRTLSKDDVNYKMHFRMINEQQVEDITID. Residues 36–56 traverse the membrane as a helical segment; sequence FFYRPHTITLLSFTIVSLMYF. Topologically, residues 57–72 are lumenal; sequence AFTRDDSVPEDNIWRG. The chain crosses the membrane as a helical span at residues 73–93; it reads ILSVIFFFLIISVLAFPNGPF. Residues 94-102 are Cytoplasmic-facing; that stretch reads TRPHPALWR. The helical transmembrane segment at 103–123 threads the bilayer; it reads MVFGLSVLYFLFLVFLLFLNF. Residues 124–186 are Lumenal-facing; it reads EQVKSLMYWL…AMKALLIRSY (63 aa). A helical transmembrane segment spans residues 187–207; the sequence is GLCWTISITWELTELFFMHLL. Over 208–216 the chain is Cytoplasmic; it reads PNFAECWWD. The chain crosses the membrane as a helical span at residues 217–237; that stretch reads QVILDILLCNGGGIWLGMVVC. The Lumenal segment spans residues 238-286; that stretch reads RFLEMRTYHWASFKDIHTTTGKIKRAVLQFTPASWTYVRWFDPKSSFQR. Residues 287–307 traverse the membrane as a helical segment; sequence VAGVYLFMIIWQLTELNTFFL. The Cytoplasmic portion of the chain corresponds to 308–319; the sequence is KHIFVFQASHPL. Residues 320–342 form a helical membrane-spanning segment; the sequence is SWGRILFIGGITAPTVRQYYAYL. Residues 343-355 lie on the Lumenal side of the membrane; it reads TDTQCKRVGTQCW. The helical transmembrane segment at 356 to 376 threads the bilayer; that stretch reads VFGVIGFLEAIVCIKFGQDLF. The Cytoplasmic segment spans residues 377–383; it reads SKTQILY. The chain crosses the membrane as a helical span at residues 384–404; that stretch reads VVLWLLCVAFTTFLCLYGMIW. The Lumenal portion of the chain corresponds to 405-473; sequence YAEHYGHREK…SKVTNGVGKK (69 aa). Residues Ser417, Ser425, Ser442, and Ser454 each carry the phosphoserine modification. The segment at 430-473 is disordered; the sequence is WHHRKGTKGSEDSPPKHAGNNESHSSRRRNRHSKSKVTNGVGKK. A compositionally biased stretch (basic residues) spans 455–464; that stretch reads SRRRNRHSKS.

This sequence belongs to the phosphatidyl serine synthase family.

The protein resides in the endoplasmic reticulum membrane. It catalyses the reaction a 1,2-diacyl-sn-glycero-3-phosphoethanolamine + L-serine = a 1,2-diacyl-sn-glycero-3-phospho-L-serine + ethanolamine. It carries out the reaction a 1,2-diacyl-sn-glycero-3-phosphocholine + L-serine = a 1,2-diacyl-sn-glycero-3-phospho-L-serine + choline. It participates in phospholipid metabolism; phosphatidylserine biosynthesis. Its activity is regulated as follows. Requires calcium ions. Inhibited by exogenous phosphatidylserine. Catalyzes a base-exchange reaction in which the polar head group of phosphatidylethanolamine (PE) or phosphatidylcholine (PC) is replaced by L-serine. Catalyzes mainly the conversion of phosphatidylcholine. Also converts, in vitro and to a lesser extent, phosphatidylethanolamine. The polypeptide is Phosphatidylserine synthase 1 (PTDSS1) (Homo sapiens (Human)).